The primary structure comprises 262 residues: Ribosomal RNA small subunit methyltransferase A (262 aa).

S-adenosyl-L-methionine is bound by residues asparagine 13, leucine 15, glycine 40, glutamate 61, aspartate 85, and asparagine 104.

This sequence belongs to the class I-like SAM-binding methyltransferase superfamily. rRNA adenine N(6)-methyltransferase family. RsmA subfamily.

The protein resides in the cytoplasm. It carries out the reaction adenosine(1518)/adenosine(1519) in 16S rRNA + 4 S-adenosyl-L-methionine = N(6)-dimethyladenosine(1518)/N(6)-dimethyladenosine(1519) in 16S rRNA + 4 S-adenosyl-L-homocysteine + 4 H(+). Specifically dimethylates two adjacent adenosines (A1518 and A1519) in the loop of a conserved hairpin near the 3'-end of 16S rRNA in the 30S particle. May play a critical role in biogenesis of 30S subunits. This is Ribosomal RNA small subunit methyltransferase A from Chromobacterium violaceum (strain ATCC 12472 / DSM 30191 / JCM 1249 / CCUG 213 / NBRC 12614 / NCIMB 9131 / NCTC 9757 / MK).